Reading from the N-terminus, the 267-residue chain is 2-dehydro-3-deoxyphosphooctonate aldolase (267 aa).

This sequence belongs to the KdsA family.

It localises to the cytoplasm. It catalyses the reaction D-arabinose 5-phosphate + phosphoenolpyruvate + H2O = 3-deoxy-alpha-D-manno-2-octulosonate-8-phosphate + phosphate. The protein operates within carbohydrate biosynthesis; 3-deoxy-D-manno-octulosonate biosynthesis; 3-deoxy-D-manno-octulosonate from D-ribulose 5-phosphate: step 2/3. It participates in bacterial outer membrane biogenesis; lipopolysaccharide biosynthesis. This is 2-dehydro-3-deoxyphosphooctonate aldolase from Campylobacter jejuni subsp. doylei (strain ATCC BAA-1458 / RM4099 / 269.97).